Reading from the N-terminus, the 462-residue chain is Bindin (462 aa).

Residues 1-19 (MARQLSVILVALTLTTALA) form the signal peptide. The propeptide occupies 20-244 (ENFPTRTSAP…DSGRSARKKR (225 aa)). Disordered stretches follow at residues 155–194 (DDRR…APKD) and 221–278 (RTRR…QGMG). The fucose-binding domain stretch occupies residues 372–380 (LRHLRHHSN).

The protein belongs to the bindin family.

Its subcellular location is the cytoplasmic vesicle. It is found in the secretory vesicle. The protein resides in the acrosome lumen. Its function is as follows. Species-specific sea urchin sperm protein required for adhesion of sperm to the egg surface during fertilization. Bindin coats the acrosomal process after it is externalized by the acrosome reaction. It binds to sulfated, fucose-containing polysaccharides on the vitelline layer receptor proteoglycans which cover the egg plasma membrane. The chain is Bindin from Lytechinus variegatus (Green sea urchin).